Reading from the N-terminus, the 262-residue chain is tRNA (guanine-N(7)-)-methyltransferase (262 aa).

The interval 1-58 (MLPQDTNTDPLPGDDAESASGKSADASQGTPNPGDEVAHPRRIRSFVRRAGRTSTGQQ) is disordered. Positions 40 to 51 (PRRIRSFVRRAG) are enriched in basic residues. Positions 92, 117, 144, and 167 each coordinate S-adenosyl-L-methionine. Residue Asp-167 is part of the active site. Lys-171 contributes to the substrate binding site. Positions 173 to 178 (RHNKRR) are interaction with RNA. Substrate is bound by residues Asp-203 and 241 to 244 (TKFE).

The protein belongs to the class I-like SAM-binding methyltransferase superfamily. TrmB family.

The catalysed reaction is guanosine(46) in tRNA + S-adenosyl-L-methionine = N(7)-methylguanosine(46) in tRNA + S-adenosyl-L-homocysteine. The protein operates within tRNA modification; N(7)-methylguanine-tRNA biosynthesis. Its function is as follows. Catalyzes the formation of N(7)-methylguanine at position 46 (m7G46) in tRNA. The polypeptide is tRNA (guanine-N(7)-)-methyltransferase (Cupriavidus metallidurans (strain ATCC 43123 / DSM 2839 / NBRC 102507 / CH34) (Ralstonia metallidurans)).